The sequence spans 37 residues: Large ribosomal subunit protein bL36c (37 aa).

This sequence belongs to the bacterial ribosomal protein bL36 family.

The protein resides in the plastid. It is found in the chloroplast. The protein is Large ribosomal subunit protein bL36c (rpl36) of Chlamydomonas reinhardtii (Chlamydomonas smithii).